The sequence spans 718 residues: Quinohemoprotein alcohol dehydrogenase ADH-IIG (718 aa).

An N-terminal signal peptide occupies residues 1-29 (MRQTGLASLPLKSLAVAVLLSLAGTPALA). Glu-92 contributes to the pyrroloquinoline quinone binding site. A disulfide bridge connects residues Cys-138 and Cys-139. Pyrroloquinoline quinone contacts are provided by residues Arg-144, Thr-189, and 205-206 (GA). Residue Glu-207 coordinates Ca(2+). Thr-264 serves as a coordination point for pyrroloquinoline quinone. Asn-284 and Asp-329 together coordinate Ca(2+). Residue Asp-329 is the Proton acceptor of the active site. Position 356 (Lys-356) interacts with pyrroloquinoline quinone. Trp-415 provides a ligand contact to substrate. Pyrroloquinoline quinone is bound by residues 419-420 (DW) and Ala-571. Positions 622 to 699 (ASIEAGAKLY…QIHQYLIKRA (78 aa)) constitute a Cytochrome c domain. The heme c site is built by Cys-635, Cys-638, His-639, and Met-676.

This sequence belongs to the bacterial PQQ dehydrogenase family. In terms of assembly, monomer. Requires pyrroloquinoline quinone as cofactor. It depends on Ca(2+) as a cofactor. Heme c serves as cofactor.

The protein localises to the periplasm. It catalyses the reaction 2 oxidized [azurin] + a primary alcohol = 2 reduced [azurin] + an aldehyde + 2 H(+). Exhibits higher affinity for 1-butanol compared to 1,2-propanediol but inhibited by 10 mM 1-butanol. Its function is as follows. Catalyzes the dye-linked oxidation of primary alcohols to the corresponding aldehydes and the (subsequent) oxidation of the aldehydes to carboxylic acids. Active with primary alcohols, glycerol, 1,2-propanediol, 1,3-propanediol but not with methanol or sugar alcohols such as D-sorbitol. This is Quinohemoprotein alcohol dehydrogenase ADH-IIG from Pseudomonas putida (Arthrobacter siderocapsulatus).